The chain runs to 228 residues: Urease accessory protein UreF 1 (228 aa).

The protein belongs to the UreF family. As to quaternary structure, ureD, UreF and UreG form a complex that acts as a GTP-hydrolysis-dependent molecular chaperone, activating the urease apoprotein by helping to assemble the nickel containing metallocenter of UreC. The UreE protein probably delivers the nickel.

Its subcellular location is the cytoplasm. In terms of biological role, required for maturation of urease via the functional incorporation of the urease nickel metallocenter. Its function is as follows. Disruption of the ure1 gene cluster suggests that it protects brucellae during their passage through the stomach. The major route of infection in human brucellosis is oral. This is Urease accessory protein UreF 1 from Brucella abortus (strain 2308).